A 230-amino-acid chain; its full sequence is NAD(P)H-hydrate epimerase (230 aa).

One can recognise a YjeF N-terminal domain in the interval 11–218 (AIDVDQELFT…ALQRKYGLNL (208 aa)). 61-65 (NNGGD) provides a ligand contact to (6S)-NADPHX. K(+) contacts are provided by Asn-62 and Asp-126. (6S)-NADPHX contacts are provided by residues 130–136 (GFSFKPP) and Asp-159. Position 162 (Ser-162) interacts with K(+).

The protein belongs to the NnrE/AIBP family. It depends on K(+) as a cofactor.

It catalyses the reaction (6R)-NADHX = (6S)-NADHX. The catalysed reaction is (6R)-NADPHX = (6S)-NADPHX. Catalyzes the epimerization of the S- and R-forms of NAD(P)HX, a damaged form of NAD(P)H that is a result of enzymatic or heat-dependent hydration. This is a prerequisite for the S-specific NAD(P)H-hydrate dehydratase to allow the repair of both epimers of NAD(P)HX. The polypeptide is NAD(P)H-hydrate epimerase (Drosophila yakuba (Fruit fly)).